The sequence spans 485 residues: Auxin transporter protein 1 (485 aa).

Residues 1 to 59 (MSEGVEAIVANDNGTDQVNGNRTGKDNEEHDGSTGSNLSNFLWHGGSVWDAWFSCASNQ) lie on the Cytoplasmic side of the membrane. A compositionally biased stretch (polar residues) spans 12–22 (DNGTDQVNGNR). Residues 12–33 (DNGTDQVNGNRTGKDNEEHDGS) are disordered. Positions 23 to 32 (TGKDNEEHDG) are enriched in basic and acidic residues. A helical transmembrane segment spans residues 60–77 (VAQVLLTLPYSFSQLGML). The Extracellular portion of the chain corresponds to 78–79 (SG). A helical membrane pass occupies residues 80 to 100 (IVLQIFYGLLGSWTAYLISVL). At 101 to 135 (YVEYRARKEKEGKSFKNHVIQWFEVLDGLLGSYWK) the chain is on the cytoplasmic side. A helical transmembrane segment spans residues 136 to 156 (ALGLAFNCTFLLFGSVIQLIA). At 157-172 (CASNIYYINDHLDKRT) the chain is on the extracellular side. A helical transmembrane segment spans residues 173–193 (WTYIFGACCATTVFIPSFHNY). The Cytoplasmic portion of the chain corresponds to 194–196 (RIW). A helical membrane pass occupies residues 197–217 (SFLGLGMTTYTAWYLAIASII). The Extracellular segment spans residues 218-232 (HGQAEGVKHSGPTKL). A helical membrane pass occupies residues 233 to 253 (VLYFTGATNILYTFGGHAVTV). At 254 to 266 (EIMHAMWKPQKFK) the chain is on the cytoplasmic side. A helical membrane pass occupies residues 267–287 (YIYLMATLYVFTLTIPSAAAV). Topologically, residues 288 to 314 (YWAFGDALLDHSNAFSLMPKNAWRDAA) are extracellular. Residues 315–335 (VILMLIHQFITFGFACTPLYF) traverse the membrane as a helical segment. The Cytoplasmic segment spans residues 336-356 (VWEKVIGMHDTKSICLRALAR). A helical membrane pass occupies residues 357 to 377 (LPVVIPIWFLAIIFPFFGPIN). Ser-378 is a topological domain (extracellular). Residues 379–399 (AVGALLVSFTVYIIPSLAHML) traverse the membrane as a helical segment. The Cytoplasmic segment spans residues 400-425 (TYRSASARQNAAEKPPFFMPSWTAMY). The chain crosses the membrane as a helical span at residues 426–446 (VLNAFVVVWVLIVGFGFGGWA). The Extracellular portion of the chain corresponds to 447 to 485 (SVTNFVRQVDTFGLFAKCYQCKPAAAAAHAPVSALHHRL).

This sequence belongs to the amino acid/polyamine transporter 2 family. Amino acid/auxin permease (AAAP) (TC 2.A.18.1) subfamily. In terms of tissue distribution, expressed in root and shoot apical tissues. In root apex, confined to stele initials, protophloem poles, statolith-containing S2 columella cells, lateral root cap cells (LRC), and in epidermal cells from the distal elongation zone (DEZ) up to central elongation zone (CEZ).

The protein resides in the cell membrane. Its activity is regulated as follows. Auxin uptake mediated by AUX1 is inhibited by chromosaponin-1 (CSI), 1-naphthoxyacetic acid (1-NOA) and 3-chloro-4-hydroxyphenylacetic acid (CHPAA). Functionally, carrier protein involved in proton-driven auxin influx. Mediates the formation of auxin gradient from developing leaves (site of auxin biosynthesis) to tips by contributing to the loading of auxin in vascular tissues and facilitating acropetal (base to tip) auxin transport within inner tissues of the root apex, and basipetal (tip to base) auxin transport within outer tissues of the root apex. Unloads auxin from the mature phloem to deliver the hormone to the root meristem via the protophloem cell files. Coordinated subcellular localization of AUX1 is regulated by a brefeldin A-sensitive (BFA) vesicle trafficking process. Involved in lateral root formation, trichoblast polarization and root hair elongation. Required for gravitropism and thigmotropism, especially in roots, by modulating responses to auxin, ethylene and cytokinins such as benzyladenine (BA). Needed for ammonium-mediated root-growth inhibition. Confers sensitivity to the herbicide 2,4-dichlorophenoxyacetic acid (2,4-D, auxin analog), and to polar auxin transport inhibitors such as N-1-naphthylphthalamic acid (NPA) and 2,3,5-triiodobenzoic acid (TIBA). This chain is Auxin transporter protein 1 (AUX1), found in Arabidopsis thaliana (Mouse-ear cress).